Here is an 80-residue protein sequence, read N- to C-terminus: Caltrin (80 aa).

The first 32 residues, 1–32, serve as a signal peptide directing secretion; it reads MMAGRRSWPAMATVLLALLVCLGELVDSKPQP.

Functionally, inhibits calcium transport into spermatozoa; it does not bind directly to calcium. Binds to calmodulin. Inhibits the growth of microorganisms. Seem to act as an antibiotic by permeabilizing the bacterial membrane. The chain is Caltrin (PYY2) from Bos taurus (Bovine).